Reading from the N-terminus, the 235-residue chain is Aspartate/glutamate leucyltransferase (235 aa).

The protein belongs to the R-transferase family. Bpt subfamily.

It localises to the cytoplasm. It carries out the reaction N-terminal L-glutamyl-[protein] + L-leucyl-tRNA(Leu) = N-terminal L-leucyl-L-glutamyl-[protein] + tRNA(Leu) + H(+). It catalyses the reaction N-terminal L-aspartyl-[protein] + L-leucyl-tRNA(Leu) = N-terminal L-leucyl-L-aspartyl-[protein] + tRNA(Leu) + H(+). In terms of biological role, functions in the N-end rule pathway of protein degradation where it conjugates Leu from its aminoacyl-tRNA to the N-termini of proteins containing an N-terminal aspartate or glutamate. The chain is Aspartate/glutamate leucyltransferase from Pseudomonas savastanoi pv. phaseolicola (strain 1448A / Race 6) (Pseudomonas syringae pv. phaseolicola (strain 1448A / Race 6)).